The chain runs to 791 residues: RAS guanyl-releasing protein 1 (791 aa).

The N-terminal Ras-GEF domain maps to 49 to 172; that stretch reads LGKLSKGASL…RLIDTAQINS (124 aa). Residues 53 to 106 are ras exchanger motif region; required for transforming activity; sequence SKGASLDDLIQMCIQAFDLDGNMGQNSELLQIMLTMHGFLLPSTELLMKLRTLY. The Ras-GEF domain occupies 201-432; the sequence is EPQELAEHLT…YELSYAREPR (232 aa). EF-hand domains follow at residues 466–501 and 502–528; these read HVQR…FPFS and FCVM…ASSI. Ca(2+) is bound by residues Asp479, Asp481, Asp483, Tyr485, Glu490, Asp506, Asp508, Glu510, and Glu517. The segment at 537–587 adopts a Phorbol-ester/DAG-type zinc-finger fold; that stretch reads LHNFQETTYLRPTFCDNCAGFLWGVIKQGYRCKDCGMNCHKQCKELVVFEC. A compositionally biased stretch (polar residues) spans 683–695; that stretch reads QVPSPQRSRTPGL. The segment at 683 to 715 is disordered; the sequence is QVPSPQRSRTPGLTSHLPISPMPSPCPSPVPTR. A compositionally biased stretch (pro residues) spans 702–712; it reads SPMPSPCPSPV. Residues 728–785 adopt a coiled-coil conformation; that stretch reads IRKARAELRGGKAGIQELEKEKALLKEENTTLKIQLKDAQRRVETLRAELRKYVLDSD.

This sequence belongs to the RASGRP family.

The protein resides in the cytoplasm. The protein localises to the cytosol. Its subcellular location is the cell membrane. It localises to the golgi apparatus membrane. It is found in the endoplasmic reticulum membrane. Its activity is regulated as follows. Regulated by F-actin polymerization and probably by calcium. Its function is as follows. Functions as a diacylglycerol (DAG)-regulated nucleotide exchange factor specifically activating Ras through the exchange of bound GDP for GTP. The protein is RAS guanyl-releasing protein 1 (rasgrp1) of Xenopus tropicalis (Western clawed frog).